We begin with the raw amino-acid sequence, 138 residues long: Secreted RxLR effector protein 51 (138 aa).

The first 19 residues, 1 to 19, serve as a signal peptide directing secretion; the sequence is MRSSTILFVLGVAMVAVNG. The short motif at 38-53 is the RxLR-dEER element; it reads RLLRSNSGKHKTDEER. Asparagine 101 carries an N-linked (GlcNAc...) asparagine glycan.

This sequence belongs to the RxLR effector family.

The protein resides in the secreted. It localises to the host nucleus. Its function is as follows. Secreted effector that completely suppresses the host cell death induced by cell death-inducing proteins. The polypeptide is Secreted RxLR effector protein 51 (Plasmopara viticola (Downy mildew of grapevine)).